The primary structure comprises 239 residues: Nicotinamide riboside transporter PnuC (239 aa).

At 1–21 the chain is on the cytoplasmic side; sequence MDFFSTHNILIHIPIGAGGYD. A helical membrane pass occupies residues 22–42; sequence LSWIEAVGTIAGLLCIWLASL. Over 43–48 the chain is Periplasmic; it reads EKISNY. A helical transmembrane segment spans residues 49–68; the sequence is FFGLVNVTLFAIIFFQIQLY. The Cytoplasmic segment spans residues 69-71; it reads ASL. Residues 72 to 89 form a helical membrane-spanning segment; that stretch reads LLQLFFFAANIYGWYAWS. At 90–109 the chain is on the periplasmic side; the sequence is RQTKDNQAELKIRWLPLPKA. The chain crosses the membrane as a helical span at residues 110 to 127; it reads MAWLAICVIAIGLMTRYI. Residues 128 to 157 are Cytoplasmic-facing; the sequence is DPVFAVLTRVAVAIMQMLGLQVTMPVLQPD. Residues 158-177 form a helical membrane-spanning segment; sequence AFPFWDSCMMVLSIVAMILM. Over 178–183 the chain is Periplasmic; the sequence is TRKYVE. A helical membrane pass occupies residues 184–206; it reads NWLLWVIINVISVVIFALQGVYA. Positions 188 and 192 each coordinate beta-nicotinamide D-riboside. Topologically, residues 207–239 are cytoplasmic; the sequence is MSLEYLILTFIAVNGSRLWINSARERGSRALSR.

Belongs to the nicotinamide ribonucleoside (NR) uptake permease (TC 4.B.1) family.

The protein resides in the cell inner membrane. Its function is as follows. Required for nicotinamide riboside transport across the inner membrane. The sequence is that of Nicotinamide riboside transporter PnuC (pnuC) from Salmonella typhimurium (strain LT2 / SGSC1412 / ATCC 700720).